The primary structure comprises 133 residues: Small ribosomal subunit protein uS8 (133 aa).

Positions 1 to 28 are disordered; that stretch reads MANHDPISDMLTRIRNASEKRHEKTKVP. Residues 16 to 26 show a composition bias toward basic and acidic residues; the sequence is NASEKRHEKTK.

The protein belongs to the universal ribosomal protein uS8 family. In terms of assembly, part of the 30S ribosomal subunit. Contacts proteins S5 and S12.

One of the primary rRNA binding proteins, it binds directly to 16S rRNA central domain where it helps coordinate assembly of the platform of the 30S subunit. This chain is Small ribosomal subunit protein uS8, found in Prochlorococcus marinus (strain NATL2A).